The following is a 1401-amino-acid chain: DNA-directed RNA polymerase subunit beta' (1401 aa).

Zn(2+)-binding residues include C71, C73, C86, and C89. Mg(2+) contacts are provided by D462, D464, and D466. Positions 810, 884, 891, and 894 each coordinate Zn(2+). The interval 1378–1401 is disordered; sequence EKQATIVPSAPEPEPLALPTPEQS.

It belongs to the RNA polymerase beta' chain family. The RNAP catalytic core consists of 2 alpha, 1 beta, 1 beta' and 1 omega subunit. When a sigma factor is associated with the core the holoenzyme is formed, which can initiate transcription. Requires Mg(2+) as cofactor. It depends on Zn(2+) as a cofactor.

It carries out the reaction RNA(n) + a ribonucleoside 5'-triphosphate = RNA(n+1) + diphosphate. Functionally, DNA-dependent RNA polymerase catalyzes the transcription of DNA into RNA using the four ribonucleoside triphosphates as substrates. The chain is DNA-directed RNA polymerase subunit beta' from Rhodopseudomonas palustris (strain BisB18).